Reading from the N-terminus, the 286-residue chain is Glycine--tRNA ligase alpha subunit (286 aa).

Belongs to the class-II aminoacyl-tRNA synthetase family. As to quaternary structure, tetramer of two alpha and two beta subunits.

The protein localises to the cytoplasm. The catalysed reaction is tRNA(Gly) + glycine + ATP = glycyl-tRNA(Gly) + AMP + diphosphate. The polypeptide is Glycine--tRNA ligase alpha subunit (glyQ) (Thermotoga maritima (strain ATCC 43589 / DSM 3109 / JCM 10099 / NBRC 100826 / MSB8)).